Here is a 279-residue protein sequence, read N- to C-terminus: Tryptophan synthase alpha chain (279 aa).

Active-site proton acceptor residues include E50 and D61.

It belongs to the TrpA family. In terms of assembly, tetramer of two alpha and two beta chains.

It catalyses the reaction (1S,2R)-1-C-(indol-3-yl)glycerol 3-phosphate + L-serine = D-glyceraldehyde 3-phosphate + L-tryptophan + H2O. It functions in the pathway amino-acid biosynthesis; L-tryptophan biosynthesis; L-tryptophan from chorismate: step 5/5. In terms of biological role, the alpha subunit is responsible for the aldol cleavage of indoleglycerol phosphate to indole and glyceraldehyde 3-phosphate. This Sinorhizobium medicae (strain WSM419) (Ensifer medicae) protein is Tryptophan synthase alpha chain.